A 468-amino-acid polypeptide reads, in one-letter code: Lysosomal dipeptide transporter MFSD1 (468 aa).

The disordered stretch occupies residues 1 to 25 (MEDEEEEARALLPGGSDEAGRETRA). Positions 11–12 (LL) match the Dileucine internalization motif motif. 12 helical membrane-spanning segments follow: residues 42–62 (LAHR…SYFC), 86–106 (LLYA…GFLI), 116–136 (TIIF…GGIF), 138–158 (AFWL…SLAV), 173–194 (LNLV…NMNL), 218–238 (LMIG…LAYL), 270–290 (WLIF…IGLV), 307–327 (AINS…GLLV), 334–354 (IIWV…LAFT), 364–384 (LLGL…AFVV), 395–415 (FMQS…GMIL), and 421–441 (LFLE…VVLL).

Belongs to the major facilitator superfamily. As to quaternary structure, homodimer. Interacts with lysosomal protein GLMP (via lumenal domain); the interaction starts while both proteins are still in the endoplasmic reticulum and is required for stabilization of MFSD1 in lysosomes but has no direct effect on its targeting to lysosomes or transporter activity.

It is found in the lysosome membrane. The catalysed reaction is L-alpha-aminoacyl-L-arginine(out) = L-alpha-aminoacyl-L-arginine(in). It catalyses the reaction L-arginyl-L-alpha-amino acid(out) = L-arginyl-L-alpha-amino acid(in). It carries out the reaction L-arginyl-glycine(out) = L-arginyl-glycine(in). The enzyme catalyses L-alpha-aminoacyl-L-lysine(out) = L-alpha-aminoacyl-L-lysine(in). The catalysed reaction is L-aspartyl-L-lysine(out) = L-aspartyl-L-lysine(in). It catalyses the reaction L-alanyl-L-lysine(out) = L-alanyl-L-lysine(in). It carries out the reaction L-lysyl-L-alpha-amino acid(out) = L-lysyl-L-alpha-amino acid(in). The enzyme catalyses L-lysyl-L-alanine(out) = L-lysyl-L-alanine(in). The catalysed reaction is L-lysyl-L-lysine(out) = L-lysyl-L-lysine(in). It catalyses the reaction L-lysyl-glycine(out) = L-lysyl-glycine(in). It carries out the reaction L-alpha-aminoacyl-L-histidine(out) = L-alpha-aminoacyl-L-histidine(in). The enzyme catalyses L-histidyl-L-alpha-amino acid(out) = L-histidyl-L-alpha-amino acid(in). The catalysed reaction is L-histidyl-glycine(out) = L-histidyl-glycine(in). Its function is as follows. Lysosomal dipeptide uniporter that selectively exports lysine, arginine or histidine-containing dipeptides with a net positive charge from the lysosome lumen into the cytosol. Could play a role in a specific type of protein O-glycosylation indirectly regulating macrophages migration and tissue invasion. Also essential for liver homeostasis. The chain is Lysosomal dipeptide transporter MFSD1 from Bos taurus (Bovine).